A 250-amino-acid polypeptide reads, in one-letter code: uncharacterized protein (250 aa).

The N-terminal stretch at 1-24 (MKGFLKPNFSLGALFLTLSPIATA) is a signal peptide. The N-palmitoyl cysteine moiety is linked to residue Cys25. Cys25 carries S-diacylglycerol cysteine lipidation. In terms of domain architecture, TNase-like spans 44–200 (RLRKARVNHW…FNNRKNIFSY (157 aa)).

The protein localises to the cell membrane. This is an uncharacterized protein from Mycoplasma genitalium (strain ATCC 33530 / DSM 19775 / NCTC 10195 / G37) (Mycoplasmoides genitalium).